Here is a 165-residue protein sequence, read N- to C-terminus: Cytochrome c-type biogenesis protein CcmE (165 aa).

The Cytoplasmic segment spans residues 1–29 (MSATAEDNARGAKPAGNFARTVSQRKRKR). Residues 30 to 50 (LFLIGGALAVLAVAVGLMLMA) form a helical; Signal-anchor for type II membrane protein membrane-spanning segment. Residues 51–165 (FSQDIRFFRT…LKEKGVWEGK (115 aa)) are Periplasmic-facing. Residues histidine 143 and tyrosine 147 each coordinate heme.

The protein belongs to the CcmE/CycJ family.

It is found in the cell inner membrane. Its function is as follows. Heme chaperone required for the biogenesis of c-type cytochromes. Transiently binds heme delivered by CcmC and transfers the heme to apo-cytochromes in a process facilitated by CcmF and CcmH. This Brucella anthropi (strain ATCC 49188 / DSM 6882 / CCUG 24695 / JCM 21032 / LMG 3331 / NBRC 15819 / NCTC 12168 / Alc 37) (Ochrobactrum anthropi) protein is Cytochrome c-type biogenesis protein CcmE.